Consider the following 131-residue polypeptide: Fluoride-specific ion channel FluC 2 (131 aa).

4 helical membrane passes run 4 to 24, 46 to 66, 71 to 91, and 105 to 125; these read IIQG…ARFW, VSGA…HGVF, PWLF…SFAL, and AISN…LGFA. Gly81 and Thr84 together coordinate Na(+).

It belongs to the fluoride channel Fluc/FEX (TC 1.A.43) family.

The protein localises to the cell inner membrane. It catalyses the reaction fluoride(in) = fluoride(out). With respect to regulation, na(+) is not transported, but it plays an essential structural role and its presence is essential for fluoride channel function. Its function is as follows. Fluoride-specific ion channel. Important for reducing fluoride concentration in the cell, thus reducing its toxicity. This chain is Fluoride-specific ion channel FluC 2, found in Rhodopseudomonas palustris (strain BisB18).